We begin with the raw amino-acid sequence, 193 residues long: RNA pyrophosphohydrolase (193 aa).

A Nudix hydrolase domain is found at 6 to 149; it reads GFRPNVGIIL…KRDVYQRALQ (144 aa). The Nudix box motif lies at 38–59; sequence GGIKFGETPEQAMFRELEEEVG. Residues 174–193 form a disordered region; that stretch reads THSARKTDEPSTEQTKPNNE.

It belongs to the Nudix hydrolase family. RppH subfamily. It depends on a divalent metal cation as a cofactor.

Its function is as follows. Accelerates the degradation of transcripts by removing pyrophosphate from the 5'-end of triphosphorylated RNA, leading to a more labile monophosphorylated state that can stimulate subsequent ribonuclease cleavage. The sequence is that of RNA pyrophosphohydrolase from Herminiimonas arsenicoxydans.